A 212-amino-acid polypeptide reads, in one-letter code: Inner membrane-spanning protein YciB (212 aa).

Transmembrane regions (helical) follow at residues 19–39 (FYGA…PVAL), 47–67 (AIYL…ALGL), 82–102 (AVIL…FILW), 105–122 (TLVN…PLFG), 147–167 (LAWV…AYTF), and 177–197 (LFGM…YLGL).

The protein belongs to the YciB family.

It localises to the cell inner membrane. In terms of biological role, plays a role in cell envelope biogenesis, maintenance of cell envelope integrity and membrane homeostasis. This is Inner membrane-spanning protein YciB from Thioalkalivibrio sulfidiphilus (strain HL-EbGR7).